Here is a 284-residue protein sequence, read N- to C-terminus: NAD kinase (284 aa).

D61 (proton acceptor) is an active-site residue. NAD(+) is bound by residues 61 to 62 (DG), R66, 136 to 137 (ND), R147, K164, D166, and L201.

This sequence belongs to the NAD kinase family. Requires a divalent metal cation as cofactor.

The protein localises to the cytoplasm. The enzyme catalyses NAD(+) + ATP = ADP + NADP(+) + H(+). In terms of biological role, involved in the regulation of the intracellular balance of NAD and NADP, and is a key enzyme in the biosynthesis of NADP. Catalyzes specifically the phosphorylation on 2'-hydroxyl of the adenosine moiety of NAD to yield NADP. The sequence is that of NAD kinase from Dehalococcoides mccartyi (strain ATCC BAA-2100 / JCM 16839 / KCTC 5957 / BAV1).